Here is a 403-residue protein sequence, read N- to C-terminus: F-box only protein 22 (403 aa).

Methionine 1 carries the N-acetylmethionine modification. The F-box domain occupies 21 to 67 (FVLSNLAEVVERVLTFLPAKALLRVACVCRLWRECVRRVLRTHRSVT). Phosphothreonine is present on threonine 127. Serine 128 carries the phosphoserine modification. Lysine 194 carries the post-translational modification N6-acetyllysine.

In terms of assembly, directly interacts with SKP1 and CUL1. Interacts (via C-terminal) with KDM4A. Interacts with TP53. Interacts with MTOR; this interaction promotes 'lys-27'-linked ubiquitination of MTOR. (Microbial infection) Interacts with SARS_COV-2 protein NSP5; this interaction attenuates NSP5-mediated inhibition of innate immunity. In terms of processing, phosphorylated by EIF2AK4 at Thr-127 causes cytoplasmic retention of FBXO22. As to expression, predominantly expressed in liver, also enriched in cardiac muscle.

The protein localises to the cytoplasm. It is found in the nucleus. It localises to the myofibril. Its subcellular location is the sarcomere. The protein resides in the z line. Its function is as follows. Substrate-recognition component of the SCF (SKP1-CUL1-F-box protein)-type E3 ubiquitin ligase complex that is implicated in the control of various cellular processes such as cell cycle control, transcriptional regulation, DNA damage repair, and apoptosis. Promotes the proteasome-dependent degradation of key sarcomeric proteins, such as alpha-actinin (ACTN2) and filamin-C (FLNC), essential for maintenance of normal contractile function. Acts as a key regulator of histone methylation marks namely H3K9 and H3K36 methylation through the regulation of histone demethylase KDM4A protein levels. In complex with KDM4A, also regulates the abundance of TP53 by targeting methylated TP53 for degradation at the late senescent stage. Under oxidative stress, promotes the ubiquitination and degradation of BACH1. Mechanistically, reactive oxygen species (ROS) covalently modify cysteine residues on the bZIP domain of BACH1, leading to its release from chromatin and making it accessible to FBXO22. Upon amino acid depletion, mediates 'Lys-27'-linked ubiquitination of MTOR and thereby inhibits substrate recruitment to mTORC1. Also inhibits SARS-CoV-2 replication by inducing NSP5 degradation. The sequence is that of F-box only protein 22 (FBXO22) from Homo sapiens (Human).